A 367-amino-acid polypeptide reads, in one-letter code: Putative F-box protein At4g10190 (367 aa).

The 51-residue stretch at 3–53 folds into the F-box domain; sequence KRNIVDLPEDLVMEILARVPTVTLVRLQSTSKRWNVLIEDKRFAEQHFTNA.

The chain is Putative F-box protein At4g10190 from Arabidopsis thaliana (Mouse-ear cress).